The chain runs to 622 residues: 1-deoxy-D-xylulose-5-phosphate synthase (622 aa).

Thiamine diphosphate contacts are provided by residues His74 and 115-117 (GHS). Asp146 contributes to the Mg(2+) binding site. Thiamine diphosphate-binding positions include 147-148 (GA), Asn175, Tyr286, and Glu366. Asn175 provides a ligand contact to Mg(2+).

This sequence belongs to the transketolase family. DXPS subfamily. As to quaternary structure, homodimer. Mg(2+) serves as cofactor. Requires thiamine diphosphate as cofactor.

The catalysed reaction is D-glyceraldehyde 3-phosphate + pyruvate + H(+) = 1-deoxy-D-xylulose 5-phosphate + CO2. Its pathway is metabolic intermediate biosynthesis; 1-deoxy-D-xylulose 5-phosphate biosynthesis; 1-deoxy-D-xylulose 5-phosphate from D-glyceraldehyde 3-phosphate and pyruvate: step 1/1. Functionally, catalyzes the acyloin condensation reaction between C atoms 2 and 3 of pyruvate and glyceraldehyde 3-phosphate to yield 1-deoxy-D-xylulose-5-phosphate (DXP). This is 1-deoxy-D-xylulose-5-phosphate synthase from Carboxydothermus hydrogenoformans (strain ATCC BAA-161 / DSM 6008 / Z-2901).